Consider the following 141-residue polypeptide: Large-conductance mechanosensitive channel (141 aa).

The next 2 helical transmembrane spans lie at 16–36 (VIDL…VDSL) and 83–103 (GAFI…FVAI).

Belongs to the MscL family. Homopentamer.

The protein localises to the cell inner membrane. Channel that opens in response to stretch forces in the membrane lipid bilayer. May participate in the regulation of osmotic pressure changes within the cell. This Azoarcus sp. (strain BH72) protein is Large-conductance mechanosensitive channel.